We begin with the raw amino-acid sequence, 213 residues long: Uridine kinase (213 aa).

15–22 (GASASGKS) is a binding site for ATP.

Belongs to the uridine kinase family.

It is found in the cytoplasm. It catalyses the reaction uridine + ATP = UMP + ADP + H(+). The catalysed reaction is cytidine + ATP = CMP + ADP + H(+). It participates in pyrimidine metabolism; CTP biosynthesis via salvage pathway; CTP from cytidine: step 1/3. Its pathway is pyrimidine metabolism; UMP biosynthesis via salvage pathway; UMP from uridine: step 1/1. This Klebsiella pneumoniae (strain 342) protein is Uridine kinase.